Reading from the N-terminus, the 340-residue chain is 4-hydroxythreonine-4-phosphate dehydrogenase (340 aa).

Substrate contacts are provided by His-141 and Thr-142. Residues His-177, His-222, and His-277 each contribute to the a divalent metal cation site. 3 residues coordinate substrate: Lys-285, Asn-294, and Arg-303.

Belongs to the PdxA family. In terms of assembly, homodimer. It depends on Zn(2+) as a cofactor. The cofactor is Mg(2+). Requires Co(2+) as cofactor.

It localises to the cytoplasm. It carries out the reaction 4-(phosphooxy)-L-threonine + NAD(+) = 3-amino-2-oxopropyl phosphate + CO2 + NADH. It functions in the pathway cofactor biosynthesis; pyridoxine 5'-phosphate biosynthesis; pyridoxine 5'-phosphate from D-erythrose 4-phosphate: step 4/5. In terms of biological role, catalyzes the NAD(P)-dependent oxidation of 4-(phosphooxy)-L-threonine (HTP) into 2-amino-3-oxo-4-(phosphooxy)butyric acid which spontaneously decarboxylates to form 3-amino-2-oxopropyl phosphate (AHAP). The chain is 4-hydroxythreonine-4-phosphate dehydrogenase from Maricaulis maris (strain MCS10) (Caulobacter maris).